The primary structure comprises 498 residues: Neuronal acetylcholine receptor subunit beta-4 (498 aa).

An N-terminal signal peptide occupies residues M1–C21. Topologically, residues R22 to L239 are extracellular. Residues N36, N93, N138, and N166 are each glycosylated (N-linked (GlcNAc...) asparagine). C153 and C167 form a disulfide bridge. A helical membrane pass occupies residues I240–Y255. Over L256 to G261 the chain is Cytoplasmic. E262 provides a ligand contact to Na(+). Residues E262–F277 traverse the membrane as a helical segment. The Extracellular segment spans residues L278 to G296. A helical transmembrane segment spans residues K297–H321. At R322–V454 the chain is on the cytoplasmic side. The disordered stretch occupies residues A357 to T377. The chain crosses the membrane as a helical span at residues A455–F478. Residues L479–D498 lie on the Extracellular side of the membrane.

Belongs to the ligand-gated ion channel (TC 1.A.9) family. Acetylcholine receptor (TC 1.A.9.1) subfamily. Beta-4/CHRNB4 sub-subfamily. As to quaternary structure, neuronal AChR is composed of two different types of subunits: alpha and beta. CHRNB4/Beta-4 subunit can be combined to CHRNA2/alpha-2, CHRNA3/alpha-3 or CHRNA4/alpha-4, CHRNA5/alpha-5 and CHRNB3/beta-3 to give rise to functional receptors. Forms stoichiometries such as (CHRNA3)2:(CHRNB4)3 or (CHRNA3:CHRNB4)2:CHRNB3. Interacts with RIC3; which is required for proper folding and assembly. Interacts with LYPD6.

The protein resides in the synaptic cell membrane. It localises to the cell membrane. It carries out the reaction Ca(2+)(in) = Ca(2+)(out). It catalyses the reaction K(+)(in) = K(+)(out). The catalysed reaction is Na(+)(in) = Na(+)(out). With respect to regulation, activated by a myriad of ligands such as acetylcholine, cytisine, nicotine, choline and epibatidine. The heteropentamer CHRNA3:CHRNB4 activity is blocked by the alpha-conotoxin ImI and AuIB. Functionally, component of neuronal acetylcholine receptors (nAChRs) that function as pentameric, ligand-gated cation channels with high calcium permeability among other activities. nAChRs are excitatory neurotrasnmitter receptors formed by a collection of nAChR subunits known to mediate synaptic transmission in the nervous system and the neuromuscular junction. Each nAchR subunit confers differential attributes to channel properties, including activation, deactivation and desensitization kinetics, pH sensitivity, cation permeability, and binding to allosteric modulators. CHRNB4 forms heteropentameric neuronal acetylcholine receptors with CHRNA2, CHRNA3 and CHRNA4, as well as CHRNA5 and CHRNB3 as accesory subunits. CHRNA3:CHRNB4 being predominant in neurons of the autonomic ganglia, it is known as ganglionic nicotinic receptor. CHRNA3:CHRNB4 or CHRNA3:CHRNA5:CHRNB4 play also an important role in the habenulo-interpeduncular tract, modulating the mesolimbic dopamine system and affecting reward circuits and addiction. Hypothalamic CHRNA3:CHRNB4 nAChR activation by nicotine leads to activation of POMC neurons and a decrease in food intake. This Homo sapiens (Human) protein is Neuronal acetylcholine receptor subunit beta-4.